A 197-amino-acid polypeptide reads, in one-letter code: Nucleoside triphosphate pyrophosphatase (197 aa).

D71 functions as the Proton acceptor in the catalytic mechanism.

Belongs to the Maf family. The cofactor is a divalent metal cation.

Its subcellular location is the cytoplasm. The enzyme catalyses a ribonucleoside 5'-triphosphate + H2O = a ribonucleoside 5'-phosphate + diphosphate + H(+). It catalyses the reaction a 2'-deoxyribonucleoside 5'-triphosphate + H2O = a 2'-deoxyribonucleoside 5'-phosphate + diphosphate + H(+). Nucleoside triphosphate pyrophosphatase. May have a dual role in cell division arrest and in preventing the incorporation of modified nucleotides into cellular nucleic acids. This Nostoc punctiforme (strain ATCC 29133 / PCC 73102) protein is Nucleoside triphosphate pyrophosphatase.